The following is an 88-amino-acid chain: MPNIKSAIKRVKTNEKRRAQNAAQKSALRTAVKHFETAAANGDVEKAQAAFVEASKKLDKAATKGLIHKNAASRQKSRLAKKLNGLSA.

Disordered stretches follow at residues 1-22 (MPNI…AQNA) and 69-88 (KNAA…GLSA).

This sequence belongs to the bacterial ribosomal protein bS20 family.

In terms of biological role, binds directly to 16S ribosomal RNA. The chain is Small ribosomal subunit protein bS20 from Shouchella clausii (strain KSM-K16) (Alkalihalobacillus clausii).